We begin with the raw amino-acid sequence, 67 residues long: Large ribosomal subunit protein uL29 (67 aa).

The protein belongs to the universal ribosomal protein uL29 family.

This Moorella thermoacetica (strain ATCC 39073 / JCM 9320) protein is Large ribosomal subunit protein uL29.